We begin with the raw amino-acid sequence, 106 residues long: uncharacterized protein (106 aa).

The segment covering 24 to 35 (ANSISSTSFYHK) has biased composition (polar residues). 2 disordered regions span residues 24–49 (ANSI…SCEE) and 65–87 (LTAE…SSDE). Composition is skewed to low complexity over residues 36-46 (SSNNNSHANAS) and 74-85 (SLSASNQPASSS).

This is an uncharacterized protein from Arabidopsis thaliana (Mouse-ear cress).